We begin with the raw amino-acid sequence, 175 residues long: uncharacterized protein (175 aa).

Belongs to the asfivirus B175L family.

This is an uncharacterized protein from African swine fever virus (strain Badajoz 1971 Vero-adapted) (Ba71V).